Consider the following 279-residue polypeptide: MTFRFLCWLTGLLLCTAAYAIPQRVISLAPHATEMAYAAGMGEQLIAVSAWSDYPPEAKKLEQVASWQGINLERILALKPDLILAWREGNPQRPLEQLANFSIPIVYLDAKTLDDIPASLRQLATYSRHPEQAERAATDFQQQIGELQHADEKHKAAHTAPLRVFIQFGTQPLFTSSKATLQSQIVSLCGAENIFSDSTVPWPQVSREQVLRRQPQAIIIGGASDKIANTQAFWQPQLTVPVITVNEDWFSRSGPRLLLAAQQICSQLAELKLAPSSAK.

The signal sequence occupies residues 1–20; the sequence is MTFRFLCWLTGLLLCTAAYA. The Fe/B12 periplasmic-binding domain maps to 24-276; it reads RVISLAPHAT…QLAELKLAPS (253 aa). Cysteines 189 and 265 form a disulfide.

Belongs to the BtuF family. As to quaternary structure, the complex is composed of two ATP-binding proteins (BtuD), two transmembrane proteins (BtuC) and a solute-binding protein (BtuF).

The protein resides in the periplasm. Part of the ABC transporter complex BtuCDF involved in vitamin B12 import. Binds vitamin B12 and delivers it to the periplasmic surface of BtuC. The polypeptide is Vitamin B12-binding protein (Pectobacterium atrosepticum (strain SCRI 1043 / ATCC BAA-672) (Erwinia carotovora subsp. atroseptica)).